Here is a 275-residue protein sequence, read N- to C-terminus: 3-oxo-isoapionate decarboxylase (275 aa).

The enzyme catalyses 3-oxoisoapionate + H(+) = L-erythrulose + CO2. Its pathway is carbohydrate metabolism. Involved in catabolism of D-apiose. Catalyzes decarboxylation of 3-oxo-isoapionate to L-erythrulose. The protein is 3-oxo-isoapionate decarboxylase of Pectobacterium atrosepticum (strain SCRI 1043 / ATCC BAA-672) (Erwinia carotovora subsp. atroseptica).